Reading from the N-terminus, the 80-residue chain is D-alanyl carrier protein 2 (80 aa).

The Carrier domain occupies 1-80; that stretch reads MIMDDVKATV…KIVAKVASLQ (80 aa). At serine 38 the chain carries O-(pantetheine 4'-phosphoryl)serine.

The protein belongs to the DltC family. Post-translationally, 4'-phosphopantetheine is transferred from CoA to a specific serine of apo-DCP.

It localises to the cytoplasm. It functions in the pathway cell wall biogenesis; lipoteichoic acid biosynthesis. Its function is as follows. Carrier protein involved in the D-alanylation of lipoteichoic acid (LTA). The loading of thioester-linked D-alanine onto DltC is catalyzed by D-alanine--D-alanyl carrier protein ligase DltA. The DltC-carried D-alanyl group is further transferred to cell membrane phosphatidylglycerol (PG) by forming an ester bond, probably catalyzed by DltD. D-alanylation of LTA plays an important role in modulating the properties of the cell wall in Gram-positive bacteria, influencing the net charge of the cell wall. The sequence is that of D-alanyl carrier protein 2 from Lactiplantibacillus plantarum (strain ATCC BAA-793 / NCIMB 8826 / WCFS1) (Lactobacillus plantarum).